Here is a 478-residue protein sequence, read N- to C-terminus: Protein nucleotidyltransferase YdiU (478 aa).

Residues Gly84, Gly86, Arg87, Lys107, Asp119, Gly120, Arg170, and Arg177 each contribute to the ATP site. The Proton acceptor role is filled by Asp246. The Mg(2+) site is built by Asn247 and Asp256. Asp256 provides a ligand contact to ATP.

Belongs to the SELO family. Requires Mg(2+) as cofactor. Mn(2+) is required as a cofactor.

It carries out the reaction L-seryl-[protein] + ATP = 3-O-(5'-adenylyl)-L-seryl-[protein] + diphosphate. The enzyme catalyses L-threonyl-[protein] + ATP = 3-O-(5'-adenylyl)-L-threonyl-[protein] + diphosphate. The catalysed reaction is L-tyrosyl-[protein] + ATP = O-(5'-adenylyl)-L-tyrosyl-[protein] + diphosphate. It catalyses the reaction L-histidyl-[protein] + UTP = N(tele)-(5'-uridylyl)-L-histidyl-[protein] + diphosphate. It carries out the reaction L-seryl-[protein] + UTP = O-(5'-uridylyl)-L-seryl-[protein] + diphosphate. The enzyme catalyses L-tyrosyl-[protein] + UTP = O-(5'-uridylyl)-L-tyrosyl-[protein] + diphosphate. Functionally, nucleotidyltransferase involved in the post-translational modification of proteins. It can catalyze the addition of adenosine monophosphate (AMP) or uridine monophosphate (UMP) to a protein, resulting in modifications known as AMPylation and UMPylation. This is Protein nucleotidyltransferase YdiU from Escherichia coli O7:K1 (strain IAI39 / ExPEC).